The following is a 447-amino-acid chain: MKTPKVGFVSLGCPKALVDSERILTQLKTDGYQVASDYDGADLVVVNTCGFIESAVQESLDAIGEAMSENGRVIVTGCLGKDEDKIRQMHPNVLKVTGAAAYQDVMEAVHEYVPAPPKHNPFIDLVPEQGIRLTPKHYAYLKISEGCNHRCTFCIIPSMRGDLVSRPVGSVLEEAAALKRAGVKEILVISQDTSAYGVDTKYKLDFWNGQPVKTKFFDMCEALGQLGIWVRLHYVYPYPHVDAVIDLMAQGKILPYLDIPFQHASPRVLKLMKRPAHSENTLEKIKLWREKCPNLVIRSTFVVGFPGETEEDFQILLDWLVEAQLDRVGCFTYSPVEGATANDLPDHVPEEIKQERYERFMQVQQQISAAKLQKRIGQTMTVLVDSLEDEYPVAVARSYADAPEIDGNVFVEDIDKSTIQPGDMLEVEITDADEYDLFAKLIKIKSV.

The MTTase N-terminal domain maps to 4 to 114 (PKVGFVSLGC…VMEAVHEYVP (111 aa)). Cys-13, Cys-49, Cys-78, Cys-147, Cys-151, and Cys-154 together coordinate [4Fe-4S] cluster. In terms of domain architecture, Radical SAM core spans 133 to 370 (LTPKHYAYLK…MQVQQQISAA (238 aa)). Positions 373–443 (QKRIGQTMTV…EYDLFAKLIK (71 aa)) constitute a TRAM domain.

Belongs to the methylthiotransferase family. RimO subfamily. [4Fe-4S] cluster serves as cofactor.

The protein localises to the cytoplasm. The enzyme catalyses L-aspartate(89)-[ribosomal protein uS12]-hydrogen + (sulfur carrier)-SH + AH2 + 2 S-adenosyl-L-methionine = 3-methylsulfanyl-L-aspartate(89)-[ribosomal protein uS12]-hydrogen + (sulfur carrier)-H + 5'-deoxyadenosine + L-methionine + A + S-adenosyl-L-homocysteine + 2 H(+). In terms of biological role, catalyzes the methylthiolation of an aspartic acid residue of ribosomal protein uS12. This is Ribosomal protein uS12 methylthiotransferase RimO from Acinetobacter baumannii (strain AB0057).